Consider the following 200-residue polypeptide: Proteasome subunit beta 2 (200 aa).

A propeptide spans Met-1–Gly-10 (removed in mature form; by autocatalysis). Thr-11 (nucleophile) is an active-site residue.

The protein belongs to the peptidase T1B family. In terms of assembly, the 20S proteasome core is composed of 14 alpha and 14 beta subunits that assemble into four stacked heptameric rings, resulting in a barrel-shaped structure. The two inner rings, each composed of seven catalytic beta subunits, are sandwiched by two outer rings, each composed of seven alpha subunits. The catalytic chamber with the active sites is on the inside of the barrel. Has a gated structure, the ends of the cylinder being occluded by the N-termini of the alpha-subunits. Is capped at one or both ends by the proteasome regulatory ATPase, PAN.

The protein resides in the cytoplasm. It catalyses the reaction Cleavage of peptide bonds with very broad specificity.. With respect to regulation, the formation of the proteasomal ATPase PAN-20S proteasome complex, via the docking of the C-termini of PAN into the intersubunit pockets in the alpha-rings, triggers opening of the gate for substrate entry. Interconversion between the open-gate and close-gate conformations leads to a dynamic regulation of the 20S proteasome proteolysis activity. Functionally, component of the proteasome core, a large protease complex with broad specificity involved in protein degradation. The polypeptide is Proteasome subunit beta 2 (Caldivirga maquilingensis (strain ATCC 700844 / DSM 13496 / JCM 10307 / IC-167)).